Consider the following 393-residue polypeptide: Digeranylgeranylglycerophospholipid reductase (393 aa).

FAD-binding residues include Ala-13, Asp-32, Cys-43, Ala-44, Gly-46, Arg-95, Val-119, Asp-274, and Gly-286. A 2,3-bis-O-(geranylgeranyl)-sn-glycerol 1-phospholipid-binding residues include Lys-327 and Gly-363.

Belongs to the geranylgeranyl reductase family. DGGGPL reductase subfamily. It depends on FAD as a cofactor.

The enzyme catalyses a 2,3-bis-O-phytanyl-sn-glycerol 1-phospholipid + 8 A = a 2,3-bis-O-(geranylgeranyl)-sn-glycerol 1-phospholipid + 8 AH2. The catalysed reaction is 2,3-bis-O-(phytanyl)-sn-glycerol 1-phosphate + 8 A = 2,3-bis-O-(geranylgeranyl)-sn-glycerol 1-phosphate + 8 AH2. It carries out the reaction CDP-2,3-bis-O-(geranylgeranyl)-sn-glycerol + 8 AH2 = CDP-2,3-bis-O-(phytanyl)-sn-glycerol + 8 A. It catalyses the reaction archaetidylserine + 8 AH2 = 2,3-bis-O-phytanyl-sn-glycero-3-phospho-L-serine + 8 A. It functions in the pathway membrane lipid metabolism; glycerophospholipid metabolism. Functionally, is involved in the reduction of 2,3-digeranylgeranylglycerophospholipids (unsaturated archaeols) into 2,3-diphytanylglycerophospholipids (saturated archaeols) in the biosynthesis of archaeal membrane lipids. Catalyzes the formation of archaetidic acid (2,3-di-O-phytanyl-sn-glyceryl phosphate) from 2,3-di-O-geranylgeranylglyceryl phosphate (DGGGP) via the hydrogenation of each double bond of the isoprenoid chains. Is also probably able to reduce double bonds of geranyl groups in CDP-2,3-bis-O-(geranylgeranyl)-sn-glycerol and archaetidylserine, thus acting at various stages in the biosynthesis of archaeal membrane lipids. This Pyrococcus furiosus (strain ATCC 43587 / DSM 3638 / JCM 8422 / Vc1) protein is Digeranylgeranylglycerophospholipid reductase.